We begin with the raw amino-acid sequence, 396 residues long: Obg-like ATPase 1 (396 aa).

The OBG-type G domain maps to 23–283 (LKIGIVGLPN…LSAEERQKYL (261 aa)). 32-37 (NVGKST) serves as a coordination point for ATP. Mg(2+) is bound by residues serine 36 and threonine 56. Residue leucine 231 participates in ATP binding. The short motif at 267–274 (LELKLQEL) is the Nuclear export signal element. The residue at position 294 (lysine 294) is an N6-acetyllysine. Residues 304–387 (QLEYFFTAGP…EDGDIIFFKF (84 aa)) form the TGS domain.

It belongs to the TRAFAC class OBG-HflX-like GTPase superfamily. OBG GTPase family. YchF/OLA1 subfamily. In terms of assembly, monomer. Mg(2+) is required as a cofactor. Expressed in all tissues tested but its expression is more abundant in testis, liver, lung, and brain. Overexpressed in several malignancies, including cancers of the colon, rectum, ovary, lung, stomach, and uterus.

It is found in the cytoplasm. It localises to the nucleus. The protein localises to the nucleolus. Its function is as follows. Hydrolyzes ATP, and can also hydrolyze GTP with lower efficiency. Has lower affinity for GTP. The sequence is that of Obg-like ATPase 1 from Homo sapiens (Human).